An 87-amino-acid polypeptide reads, in one-letter code: Phosphoribosyl-ATP pyrophosphatase (87 aa).

Belongs to the PRA-PH family.

The protein localises to the cytoplasm. The enzyme catalyses 1-(5-phospho-beta-D-ribosyl)-ATP + H2O = 1-(5-phospho-beta-D-ribosyl)-5'-AMP + diphosphate + H(+). It functions in the pathway amino-acid biosynthesis; L-histidine biosynthesis; L-histidine from 5-phospho-alpha-D-ribose 1-diphosphate: step 2/9. The polypeptide is Phosphoribosyl-ATP pyrophosphatase (Paenarthrobacter aurescens (strain TC1)).